Here is a 206-residue protein sequence, read N- to C-terminus: Small ribosomal subunit protein uS4 (206 aa).

In terms of domain architecture, S4 RNA-binding spans 96–156 (CRLDNVVYRM…EKSSNQLRIV (61 aa)).

Belongs to the universal ribosomal protein uS4 family. Part of the 30S ribosomal subunit. Contacts protein S5. The interaction surface between S4 and S5 is involved in control of translational fidelity.

Its function is as follows. One of the primary rRNA binding proteins, it binds directly to 16S rRNA where it nucleates assembly of the body of the 30S subunit. In terms of biological role, with S5 and S12 plays an important role in translational accuracy. The polypeptide is Small ribosomal subunit protein uS4 (Pseudomonas putida (strain W619)).